We begin with the raw amino-acid sequence, 129 residues long: Small ribosomal subunit protein uS11 (129 aa).

Belongs to the universal ribosomal protein uS11 family. As to quaternary structure, part of the 30S ribosomal subunit. Interacts with proteins S7 and S18. Binds to IF-3.

Located on the platform of the 30S subunit, it bridges several disparate RNA helices of the 16S rRNA. Forms part of the Shine-Dalgarno cleft in the 70S ribosome. This chain is Small ribosomal subunit protein uS11, found in Thermosipho melanesiensis (strain DSM 12029 / CIP 104789 / BI429).